A 526-amino-acid polypeptide reads, in one-letter code: Bifunctional purine biosynthesis protein PurH (526 aa).

Positions 15–161 constitute an MGS-like domain; the sequence is DVVPIRRALI…KNHANVAIVV (147 aa).

Belongs to the PurH family.

It catalyses the reaction (6R)-10-formyltetrahydrofolate + 5-amino-1-(5-phospho-beta-D-ribosyl)imidazole-4-carboxamide = 5-formamido-1-(5-phospho-D-ribosyl)imidazole-4-carboxamide + (6S)-5,6,7,8-tetrahydrofolate. It carries out the reaction IMP + H2O = 5-formamido-1-(5-phospho-D-ribosyl)imidazole-4-carboxamide. It functions in the pathway purine metabolism; IMP biosynthesis via de novo pathway; 5-formamido-1-(5-phospho-D-ribosyl)imidazole-4-carboxamide from 5-amino-1-(5-phospho-D-ribosyl)imidazole-4-carboxamide (10-formyl THF route): step 1/1. Its pathway is purine metabolism; IMP biosynthesis via de novo pathway; IMP from 5-formamido-1-(5-phospho-D-ribosyl)imidazole-4-carboxamide: step 1/1. This chain is Bifunctional purine biosynthesis protein PurH, found in Leifsonia xyli subsp. xyli (strain CTCB07).